A 276-amino-acid polypeptide reads, in one-letter code: Neuroendocrine protein 7B2 (276 aa).

Cysteines 155 and 168 form a disulfide.

It belongs to the 7B2 family. As to quaternary structure, interacts with amon/PC2 early in the secretory pathway. Dissociation occurs at later stages.

The protein resides in the secreted. Its function is as follows. Acts as a molecular chaperone for neuroendocrine convertase amon/PC2, preventing its premature activation in the regulated secretory pathway. Binds to inactive amon in the endoplasmic reticulum and facilitates its transport from there to later compartments of the secretory pathway where it is proteolytically matured and activated. Also required for cleavage of amon. This is Neuroendocrine protein 7B2 from Drosophila melanogaster (Fruit fly).